The primary structure comprises 217 residues: MFNFWGSKDQQQGQSRPQEASSQSPWYSPSLVSSPSSSRPQSSGQISAQVSPGEAAGIIVFLKDKSVDELRKLLSDKDAYQQFLLSLDQVKVQNNIKDELRRETLQLARDNLEKEPQIMELRNQCRIIRTTELATAQEKLNELERQKEEILKFYSPGSLLHKLQEAMNQVDEESEALQEKFLEKEIDTAAFVQKYKKLRTTYHRRALIHLAAKTSNI.

The disordered stretch occupies residues 1-49 (MFNFWGSKDQQQGQSRPQEASSQSPWYSPSLVSSPSSSRPQSSGQISAQ). Over residues 8-20 (KDQQQGQSRPQEA) the composition is skewed to polar residues. Low complexity predominate over residues 21–47 (SSQSPWYSPSLVSSPSSSRPQSSGQIS). Residues 137-217 (QEKLNELERQ…IHLAAKTSNI (81 aa)) form the VPS37 C-terminal domain.

It belongs to the VPS37 family. Component of the endosomal sorting required for transport complex I (ESCRT-I), composed of ELC, VPS28 and VPS37. Interacts with ELC.

Its subcellular location is the endosome. Component of the ESCRT-I complex (endosomal sorting complex required for transport I), a regulator of vesicular trafficking process. Required for the sorting of endocytic ubiquitinated cargos into multivesicular bodies (MVBs). The polypeptide is Vacuolar protein-sorting-associated protein 37 homolog 1 (VPS37-1) (Arabidopsis thaliana (Mouse-ear cress)).